A 365-amino-acid chain; its full sequence is Aminomethyltransferase (365 aa).

Belongs to the GcvT family. The glycine cleavage system is composed of four proteins: P, T, L and H.

It catalyses the reaction N(6)-[(R)-S(8)-aminomethyldihydrolipoyl]-L-lysyl-[protein] + (6S)-5,6,7,8-tetrahydrofolate = N(6)-[(R)-dihydrolipoyl]-L-lysyl-[protein] + (6R)-5,10-methylene-5,6,7,8-tetrahydrofolate + NH4(+). In terms of biological role, the glycine cleavage system catalyzes the degradation of glycine. The protein is Aminomethyltransferase of Parafrankia sp. (strain EAN1pec).